The chain runs to 30 residues: Cyclotide cter-O (30 aa).

The segment at residues 1–30 (GIPCGESCVFIPCITGIAGCSCKSKVCYRN) is a cross-link (cyclopeptide (Gly-Asn)). Disulfide bonds link cysteine 4/cysteine 20, cysteine 8/cysteine 22, and cysteine 13/cysteine 27.

Post-translationally, this is a cyclic peptide.

The protein resides in the secreted. Its function is as follows. Probably participates in a plant defense mechanism. This is Cyclotide cter-O from Clitoria ternatea (Butterfly pea).